A 287-amino-acid chain; its full sequence is MAIRNFRPYTPGTRTRVVTDFSEITSRKPERTLVVAKHRRKGRNNRGVITCRHRGGGHKRLYRVVDFRRNKHGVPAKVAAIHYDPHRNARLALLFYADGEKRYILAPAGVQVGQTVVSGPDAPIENGNAMPLSSVPLGSAVHCVELYAGRGGQMVRTAGASAQVMAKEGDYVALKLPSTEVRLVRRECYATLGEVGNSEMRNTSLGKAGRRRWLGRRPQVRGSVMNPCDHPHGGGEGRAPIGRSGPVTPWGKPALGLKTRKRNKPSNQYVLRKRRKTSKRSRGGRDS.

The interval 221-287 (RGSVMNPCDH…SKRSRGGRDS (67 aa)) is disordered. Over residues 271–287 (LRKRRKTSKRSRGGRDS) the composition is skewed to basic residues.

The protein belongs to the universal ribosomal protein uL2 family. In terms of assembly, part of the 50S ribosomal subunit. Forms a bridge to the 30S subunit in the 70S ribosome.

In terms of biological role, one of the primary rRNA binding proteins. Required for association of the 30S and 50S subunits to form the 70S ribosome, for tRNA binding and peptide bond formation. It has been suggested to have peptidyltransferase activity; this is somewhat controversial. Makes several contacts with the 16S rRNA in the 70S ribosome. In Synechococcus sp. (strain CC9605), this protein is Large ribosomal subunit protein uL2.